The following is a 523-amino-acid chain: Acetyl-CoA hydrolase (523 aa).

277-281 (GIGNI) lines the CoA pocket. E302 (5-glutamyl coenzyme A thioester intermediate) is an active-site residue. N392 and G396 together coordinate CoA.

Belongs to the acetyl-CoA hydrolase/transferase family.

It localises to the cytoplasm. The catalysed reaction is acetyl-CoA + H2O = acetate + CoA + H(+). Its function is as follows. Presumably involved in regulating the intracellular acetyl-CoA pool for fatty acid and cholesterol synthesis and fatty acid oxidation. The polypeptide is Acetyl-CoA hydrolase (ACH1) (Eremothecium gossypii (strain ATCC 10895 / CBS 109.51 / FGSC 9923 / NRRL Y-1056) (Yeast)).